The chain runs to 524 residues: Cytochrome P450 1A1 (524 aa).

The segment at 33 to 44 (LRTQVPKGLKTP) is mitochondrial targeting signal. S71 carries O-linked (GlcNAc) serine glycosylation. F228 is a binding site for substrate. Residue C461 participates in heme binding.

The protein belongs to the cytochrome P450 family. In terms of assembly, interacts with cytosolic chaperones HSP70 and HSP90; this interaction is required for initial targeting to mitochondria. Interacts (via mitochondrial targeting signal) with TOMM40 (via N-terminus); this interaction is required for translocation across the mitochondrial outer membrane. Heme serves as cofactor.

It localises to the endoplasmic reticulum membrane. The protein localises to the mitochondrion inner membrane. Its subcellular location is the microsome membrane. The protein resides in the cytoplasm. It carries out the reaction an organic molecule + reduced [NADPH--hemoprotein reductase] + O2 = an alcohol + oxidized [NADPH--hemoprotein reductase] + H2O + H(+). The catalysed reaction is estrone + reduced [NADPH--hemoprotein reductase] + O2 = 2-hydroxyestrone + oxidized [NADPH--hemoprotein reductase] + H2O + H(+). The enzyme catalyses estrone + reduced [NADPH--hemoprotein reductase] + O2 = 4-hydroxyestrone + oxidized [NADPH--hemoprotein reductase] + H2O + H(+). It catalyses the reaction estrone + reduced [NADPH--hemoprotein reductase] + O2 = 6alpha-hydroxyestrone + oxidized [NADPH--hemoprotein reductase] + H2O + H(+). It carries out the reaction estrone + reduced [NADPH--hemoprotein reductase] + O2 = 15alpha-hydroxyestrone + oxidized [NADPH--hemoprotein reductase] + H2O + H(+). The catalysed reaction is estrone + reduced [NADPH--hemoprotein reductase] + O2 = 16alpha-hydroxyestrone + oxidized [NADPH--hemoprotein reductase] + H2O + H(+). The enzyme catalyses 17beta-estradiol + reduced [NADPH--hemoprotein reductase] + O2 = 2-hydroxy-17beta-estradiol + oxidized [NADPH--hemoprotein reductase] + H2O + H(+). It catalyses the reaction 17beta-estradiol + reduced [NADPH--hemoprotein reductase] + O2 = 4-hydroxy-17beta-estradiol + oxidized [NADPH--hemoprotein reductase] + H2O + H(+). It carries out the reaction 17beta-estradiol + reduced [NADPH--hemoprotein reductase] + O2 = 6alpha-hydroxy-17beta-estradiol + oxidized [NADPH--hemoprotein reductase] + H2O + H(+). The catalysed reaction is 17beta-estradiol + reduced [NADPH--hemoprotein reductase] + O2 = 7alpha-hydroxy-17beta-estradiol + oxidized [NADPH--hemoprotein reductase] + H2O + H(+). The enzyme catalyses 17beta-estradiol + reduced [NADPH--hemoprotein reductase] + O2 = 15alpha-hydroxy-17beta-estradiol + oxidized [NADPH--hemoprotein reductase] + H2O + H(+). It catalyses the reaction (5Z,8Z,11Z)-eicosatrienoate + reduced [NADPH--hemoprotein reductase] + O2 = 19-hydroxy-(5Z,8Z,11Z)-eicosatrienoate + oxidized [NADPH--hemoprotein reductase] + H2O + H(+). It carries out the reaction (5Z,8Z,11Z,14Z)-eicosatetraenoate + reduced [NADPH--hemoprotein reductase] + O2 = 16-hydroxy-(5Z,8Z,11Z,14Z)-eicosatetraenoate + oxidized [NADPH--hemoprotein reductase] + H2O + H(+). The catalysed reaction is (5Z,8Z,11Z,14Z)-eicosatetraenoate + reduced [NADPH--hemoprotein reductase] + O2 = 17-hydroxy-(5Z,8Z,11Z,14Z)-eicosatetraenoate + oxidized [NADPH--hemoprotein reductase] + H2O + H(+). The enzyme catalyses (5Z,8Z,11Z,14Z)-eicosatetraenoate + reduced [NADPH--hemoprotein reductase] + O2 = 18-hydroxy-(5Z,8Z,11Z,14Z)-eicosatetraenoate + oxidized [NADPH--hemoprotein reductase] + H2O + H(+). It catalyses the reaction (5Z,8Z,11Z,14Z)-eicosatetraenoate + reduced [NADPH--hemoprotein reductase] + O2 = 19-hydroxy-(5Z,8Z,11Z,14Z)-eicosatetraenoate + oxidized [NADPH--hemoprotein reductase] + H2O + H(+). It carries out the reaction (5Z,8Z,11Z,14Z,17Z)-eicosapentaenoate + reduced [NADPH--hemoprotein reductase] + O2 = 19-hydroxy-(5Z,8Z,11Z,14Z,17Z)-eicosapentaenoate + oxidized [NADPH--hemoprotein reductase] + H2O + H(+). The catalysed reaction is (5Z,8Z,11Z,14Z)-eicosatetraenoate + reduced [NADPH--hemoprotein reductase] + O2 = (8R,9S)-epoxy-(5Z,11Z,14Z)-eicosatrienoate + oxidized [NADPH--hemoprotein reductase] + H2O + H(+). The enzyme catalyses (5Z,8Z,11Z,14Z)-eicosatetraenoate + reduced [NADPH--hemoprotein reductase] + O2 = (11R,12S)-epoxy-(5Z,8Z,14Z)-eicosatrienoate + oxidized [NADPH--hemoprotein reductase] + H2O + H(+). It catalyses the reaction (5Z,8Z,11Z,14Z)-eicosatetraenoate + reduced [NADPH--hemoprotein reductase] + O2 = (14S,15R)-epoxy-(5Z,8Z,11Z)-eicosatrienoate + oxidized [NADPH--hemoprotein reductase] + H2O + H(+). It carries out the reaction (5Z,8Z,11Z,14Z)-eicosatetraenoate + reduced [NADPH--hemoprotein reductase] + O2 = (14R,15S)-epoxy-(5Z,8Z,11Z)-eicosatrienoate + oxidized [NADPH--hemoprotein reductase] + H2O + H(+). The catalysed reaction is (5Z,8Z,11Z,14Z,17Z)-eicosapentaenoate + reduced [NADPH--hemoprotein reductase] + O2 = (17R,18S)-epoxy-(5Z,8Z,11Z,14Z)-eicosatetraenoate + oxidized [NADPH--hemoprotein reductase] + H2O + H(+). The enzyme catalyses (4Z,7Z,10Z,13Z,16Z,19Z)-docosahexaenoate + reduced [NADPH--hemoprotein reductase] + O2 = (19S,20R)-epoxy-(4Z,7Z,10Z,13Z,16Z)-docosapentaenoate + oxidized [NADPH--hemoprotein reductase] + H2O + H(+). It catalyses the reaction (4Z,7Z,10Z,13Z,16Z,19Z)-docosahexaenoate + reduced [NADPH--hemoprotein reductase] + O2 = (19R,20S)-epoxy-(4Z,7Z,10Z,13Z,16Z)-docosapentaenoate + oxidized [NADPH--hemoprotein reductase] + H2O + H(+). It carries out the reaction all-trans-retinol + reduced [NADPH--hemoprotein reductase] + O2 = all-trans-retinal + oxidized [NADPH--hemoprotein reductase] + 2 H2O + H(+). The catalysed reaction is all-trans-retinal + reduced [NADPH--hemoprotein reductase] + O2 = all-trans-retinoate + oxidized [NADPH--hemoprotein reductase] + H2O + 2 H(+). The enzyme catalyses (13S)-hydroperoxy-(9Z,11E)-octadecadienoate = 13-oxo-(9Z,11E)-octadecadienoate + H2O. It catalyses the reaction (12S)-hydroperoxy-(5Z,8Z,10E,14Z)-eicosatetraenoate = 12-oxo-(5Z,8Z,10E,14Z)-eicosatetraenoate + H2O. It carries out the reaction (15S)-hydroperoxy-(5Z,8Z,11Z,13E)-eicosatetraenoate = 15-oxo-(5Z,8Z,11Z,13E)-eicosatetraenoate + H2O. The catalysed reaction is (5S)-hydroperoxy-(6E,8Z,11Z,14Z)-eicosatetraenoate = 5-oxo-(6E,8Z,11Z,14Z)-eicosatetraenoate + H2O. Its pathway is steroid hormone biosynthesis. It functions in the pathway lipid metabolism; fatty acid metabolism. The protein operates within cofactor metabolism; retinol metabolism. In terms of biological role, a cytochrome P450 monooxygenase involved in the metabolism of various endogenous substrates, including fatty acids, steroid hormones and vitamins. Mechanistically, uses molecular oxygen inserting one oxygen atom into a substrate, and reducing the second into a water molecule, with two electrons provided by NADPH via cytochrome P450 reductase (CPR; NADPH-ferrihemoprotein reductase). Catalyzes the hydroxylation of carbon-hydrogen bonds. Exhibits high catalytic activity for the formation of hydroxyestrogens from estrone (E1) and 17beta-estradiol (E2), namely 2-hydroxy E1 and E2, as well as D-ring hydroxylated E1 and E2 at the C15alpha and C16alpha positions. Displays different regioselectivities for polyunsaturated fatty acids (PUFA) hydroxylation. Catalyzes the epoxidation of double bonds of certain PUFA. Converts arachidonic acid toward epoxyeicosatrienoic acid (EET) regioisomers, 8,9-, 11,12-, and 14,15-EET, that function as lipid mediators in the vascular system. Displays an absolute stereoselectivity in the epoxidation of eicosapentaenoic acid (EPA) producing the 17(R),18(S) enantiomer. May play an important role in all-trans retinoic acid biosynthesis in extrahepatic tissues. Catalyzes two successive oxidative transformation of all-trans retinol to all-trans retinal and then to the active form all-trans retinoic acid. May also participate in eicosanoids metabolism by converting hydroperoxide species into oxo metabolites (lipoxygenase-like reaction, NADPH-independent). The polypeptide is Cytochrome P450 1A1 (CYP1A1) (Mesocricetus auratus (Golden hamster)).